The following is a 131-amino-acid chain: ATP synthase epsilon chain (131 aa).

This sequence belongs to the ATPase epsilon chain family. In terms of assembly, F-type ATPases have 2 components, CF(1) - the catalytic core - and CF(0) - the membrane proton channel. CF(1) has five subunits: alpha(3), beta(3), gamma(1), delta(1), epsilon(1). CF(0) has three main subunits: a, b and c.

Its subcellular location is the cell inner membrane. Functionally, produces ATP from ADP in the presence of a proton gradient across the membrane. The sequence is that of ATP synthase epsilon chain from Wolinella succinogenes (strain ATCC 29543 / DSM 1740 / CCUG 13145 / JCM 31913 / LMG 7466 / NCTC 11488 / FDC 602W) (Vibrio succinogenes).